The following is a 413-amino-acid chain: Low-salt glycan biosynthesis hexosyltransferase Agl6 (413 aa).

A disordered region spans residues 1–27 (MSTRSQSESPVDAPQQGATNGQSASDI). Residues 16–25 (QGATNGQSAS) are compositionally biased toward polar residues. 4 helical membrane-spanning segments follow: residues 270–290 (LFSAPGFGLSVIGVLALVLAW), 304–324 (TGIGGGLLTLAGFQLMLFGAF), 355–375 (IGSVVLLCGLAYGGLLAFTWV), and 389–409 (VVATVAVVIGLQMVFGSFLLG).

This sequence belongs to the glycosyltransferase 2 family.

It localises to the membrane. The protein operates within protein modification; protein glycosylation. It participates in cell surface structure biogenesis; S-layer biogenesis. Functionally, hexosyltransferase involved in N-glycan biosynthetic pathway that takes place under low-salt conditions (1.75 M instead of 3.4 M). Participates in the formation of the tetrasaccharide present at 'Asn-532' of S-layer glycoprotein Csg, consisting of a sulfated hexose, 2 hexoses and rhamnose. Together with Agl5, mediates the addition of sugars 1 and 2 to dolichol phosphate in the tetrasaccharide. The chain is Low-salt glycan biosynthesis hexosyltransferase Agl6 (agl6) from Haloferax volcanii (strain ATCC 29605 / DSM 3757 / JCM 8879 / NBRC 14742 / NCIMB 2012 / VKM B-1768 / DS2) (Halobacterium volcanii).